Here is a 299-residue protein sequence, read N- to C-terminus: Tyrosine recombinase XerC (299 aa).

Residues 1-85 (MEQHLDAYCM…AVRGFYKYLN (85 aa)) form the Core-binding (CB) domain. The region spanning 106–285 (RLPKTLDTDR…DFQHLATVYD (180 aa)) is the Tyr recombinase domain. Active-site residues include Arg146, Lys170, His237, Arg240, and His263. Catalysis depends on Tyr272, which acts as the O-(3'-phospho-DNA)-tyrosine intermediate.

The protein belongs to the 'phage' integrase family. XerC subfamily. As to quaternary structure, forms a cyclic heterotetrameric complex composed of two molecules of XerC and two molecules of XerD.

The protein resides in the cytoplasm. Site-specific tyrosine recombinase, which acts by catalyzing the cutting and rejoining of the recombining DNA molecules. The XerC-XerD complex is essential to convert dimers of the bacterial chromosome into monomers to permit their segregation at cell division. It also contributes to the segregational stability of plasmids. This chain is Tyrosine recombinase XerC, found in Pseudomonas savastanoi pv. phaseolicola (strain 1448A / Race 6) (Pseudomonas syringae pv. phaseolicola (strain 1448A / Race 6)).